The primary structure comprises 443 residues: Tubulin beta chain (443 aa).

The GTP site is built by Q11, E69, S138, G142, T143, G144, N204, and N226. E69 contacts Mg(2+). The segment at 424–443 is disordered; it reads QYQDATAEEEGEFEEEEGEN. A compositionally biased stretch (acidic residues) spans 429-443; sequence TAEEEGEFEEEEGEN.

The protein belongs to the tubulin family. Dimer of alpha and beta chains. A typical microtubule is a hollow water-filled tube with an outer diameter of 25 nm and an inner diameter of 15 nM. Alpha-beta heterodimers associate head-to-tail to form protofilaments running lengthwise along the microtubule wall with the beta-tubulin subunit facing the microtubule plus end conferring a structural polarity. Microtubules usually have 13 protofilaments but different protofilament numbers can be found in some organisms and specialized cells. The cofactor is Mg(2+).

It localises to the cytoplasm. Its subcellular location is the cytoskeleton. Its function is as follows. Tubulin is the major constituent of microtubules, a cylinder consisting of laterally associated linear protofilaments composed of alpha- and beta-tubulin heterodimers. Microtubules grow by the addition of GTP-tubulin dimers to the microtubule end, where a stabilizing cap forms. Below the cap, tubulin dimers are in GDP-bound state, owing to GTPase activity of alpha-tubulin. The protein is Tubulin beta chain (BETA-TT1) of Tetrahymena pyriformis.